A 647-amino-acid polypeptide reads, in one-letter code: Acetyl-coenzyme A synthetase (647 aa).

Residues 190–193 (RGGK), Thr-310, and Asn-334 contribute to the CoA site. ATP is bound by residues 386–388 (GEP), 410–415 (DTWWQT), Asp-499, and Arg-514. Residue Ser-522 participates in CoA binding. Arg-525 lines the ATP pocket. Residues Val-536, His-538, and Val-541 each contribute to the Mg(2+) site. Arg-583 provides a ligand contact to CoA. Lys-608 is modified (N6-acetyllysine).

It belongs to the ATP-dependent AMP-binding enzyme family. Mg(2+) serves as cofactor. Post-translationally, acetylated. Deacetylation by the SIR2-homolog deacetylase activates the enzyme.

The catalysed reaction is acetate + ATP + CoA = acetyl-CoA + AMP + diphosphate. In terms of biological role, catalyzes the conversion of acetate into acetyl-CoA (AcCoA), an essential intermediate at the junction of anabolic and catabolic pathways. AcsA undergoes a two-step reaction. In the first half reaction, AcsA combines acetate with ATP to form acetyl-adenylate (AcAMP) intermediate. In the second half reaction, it can then transfer the acetyl group from AcAMP to the sulfhydryl group of CoA, forming the product AcCoA. The protein is Acetyl-coenzyme A synthetase of Xanthomonas campestris pv. campestris (strain 8004).